Here is a 75-residue protein sequence, read N- to C-terminus: Small ribosomal subunit protein bS18 (75 aa).

It belongs to the bacterial ribosomal protein bS18 family. Part of the 30S ribosomal subunit. Forms a tight heterodimer with protein bS6.

Its function is as follows. Binds as a heterodimer with protein bS6 to the central domain of the 16S rRNA, where it helps stabilize the platform of the 30S subunit. The sequence is that of Small ribosomal subunit protein bS18 from Pseudoalteromonas atlantica (strain T6c / ATCC BAA-1087).